Consider the following 238-residue polypeptide: MAAALAVRGAVSAPAFGPEALTPDWENREVSTGTTIMAVQFDGGVVLGADSRTTTGSYIANRVTDKLTPIHDHIFCCRSGSAADTQAVADAVTYQLGFHSIELNEPPLVHTAASLFKEMCYRYREDLMAGIIIAGWDPQEGGQVYSVPMGGMMVRQSFAIGGSGSSYIYGYVDATYREGMTKDECLQFTANALALAMERDGSSGGVIRLAAIQQSGVERQVLLGDQIPKVTISTLPPP.

Ala2 bears the N-acetylalanine mark. Positions Ala2–Gly33 are cleaved as a propeptide — removed in mature form. The active-site Nucleophile is the Thr34. At Thr68 the chain carries Phosphothreonine.

It belongs to the peptidase T1B family. As to quaternary structure, the 26S proteasome consists of a 20S proteasome core and two 19S regulatory subunits. The 20S proteasome core is a barrel-shaped complex made of 28 subunits that are arranged in four stacked rings. The two outer rings are each formed by seven alpha subunits, and the two inner rings are formed by seven beta subunits. The proteolytic activity is exerted by three beta-subunits PSMB5, PSMB6 and PSMB7.

Its subcellular location is the cytoplasm. It localises to the nucleus. It carries out the reaction Cleavage of peptide bonds with very broad specificity.. Functionally, component of the 20S core proteasome complex involved in the proteolytic degradation of most intracellular proteins. This complex plays numerous essential roles within the cell by associating with different regulatory particles. Associated with two 19S regulatory particles, forms the 26S proteasome and thus participates in the ATP-dependent degradation of ubiquitinated proteins. The 26S proteasome plays a key role in the maintenance of protein homeostasis by removing misfolded or damaged proteins that could impair cellular functions, and by removing proteins whose functions are no longer required. Associated with the PA200 or PA28, the 20S proteasome mediates ubiquitin-independent protein degradation. This type of proteolysis is required in several pathways including spermatogenesis (20S-PA200 complex) or generation of a subset of MHC class I-presented antigenic peptides (20S-PA28 complex). Within the 20S core complex, PSMB6 displays a peptidylglutamyl-hydrolyzing activity also termed postacidic or caspase-like activity, meaning that the peptides bond hydrolysis occurs directly after acidic residues. The chain is Proteasome subunit beta type-6 (Psmb6) from Rattus norvegicus (Rat).